The sequence spans 309 residues: Tumor necrosis factor ligand superfamily member 13B (309 aa).

Residues 1 to 47 lie on the Cytoplasmic side of the membrane; the sequence is MDESAKTLPPPCLCFCSEKGEDMKVGYDPITPQKEEGAWFGICRDGR. The chain crosses the membrane as a helical; Signal-anchor for type II membrane protein span at residues 48-68; it reads LLAATLLLALLSSSFTAMSLY. The Extracellular segment spans residues 69–309; the sequence is QLAALQADLM…DTFFGALKLL (241 aa). The segment at 110 to 140 is disordered; it reads PAAPRPHNSSRGHRNRRAFQGPEETEQDVDL. Residues N117 and N266 are each glycosylated (N-linked (GlcNAc...) asparagine). Positions 117 to 126 are enriched in basic residues; the sequence is NSSRGHRNRR. In terms of domain architecture, THD spans 169 to 308; sequence DCLQLIADSD…DDTFFGALKL (140 aa). Cysteines 256 and 269 form a disulfide.

It belongs to the tumor necrosis factor family. Homotrimer. Isoform 2 heteromultimerizes with isoform 1, probably limiting the amount of functional isoform 1 on the cell surface. The soluble form derives from the membrane form by proteolytic processing. Post-translationally, isoform 2 is not efficiently shed from the membrane unlike isoform 1. As to expression, isoform 2 is expressed in many myeloid cell lines.

It localises to the cell membrane. It is found in the secreted. Its function is as follows. Cytokine that binds to TNFRSF13B/TACI and TNFRSF17/BCMA. TNFSF13/APRIL binds to the same 2 receptors. Together, they form a 2 ligands -2 receptors pathway involved in the stimulation of B- and T-cell function and the regulation of humoral immunity. A third B-cell specific BAFF-receptor (BAFFR/BR3) promotes the survival of mature B-cells and the B-cell response. In terms of biological role, isoform 2 seems to inhibit isoform 1 secretion and bioactivity. This Mus musculus (Mouse) protein is Tumor necrosis factor ligand superfamily member 13B (Tnfsf13b).